The primary structure comprises 906 residues: ATP-dependent DNA helicase PIF1 (906 aa).

2 disordered regions span residues 77-146 (DSEI…SSTF) and 229-297 (LEGS…PFKV). Over residues 78–87 (SEIKESDDLS) the composition is skewed to basic and acidic residues. Polar residues predominate over residues 88–119 (KGQSHVYNGSPVTKNSILQIEKQQIQKSPRPT). The span at 120–132 (ETNKRMQIRKDPD) shows a compositional bias: basic and acidic residues. The span at 234–261 (NKVQADNASPFRITSSFSSPSQIQNQGV) shows a compositional bias: polar residues. The segment covering 273 to 291 (QNVSSASQSSSPPMTVSQV) has biased composition (low complexity). An ATP-binding site is contributed by 390 to 397 (GSAGTGKS). Residues 840 to 859 (QAYVALSRAVSRAGLQVLNF) mediate DNA binding.

It belongs to the helicase family. PIF1 subfamily. Monomer. Interacts with telomerase. It depends on Mg(2+) as a cofactor.

The protein resides in the nucleus. It is found in the mitochondrion. The enzyme catalyses Couples ATP hydrolysis with the unwinding of duplex DNA at the replication fork by translocating in the 5'-3' direction. This creates two antiparallel DNA single strands (ssDNA). The leading ssDNA polymer is the template for DNA polymerase III holoenzyme which synthesizes a continuous strand.. It catalyses the reaction ATP + H2O = ADP + phosphate + H(+). DNA-dependent ATPase and 5'-3' DNA helicase required for the maintenance of both mitochondrial and nuclear genome stability. Efficiently unwinds G-quadruplex (G4) DNA structures and forked RNA-DNA hybrids. Resolves G4 structures, preventing replication pausing and double-strand breaks (DSBs) at G4 motifs. Involved in the maintenance of telomeric DNA. Inhibits telomere elongation, de novo telomere formation and telomere addition to DSBs via catalytic inhibition of telomerase. Reduces the processivity of telomerase by displacing active telomerase from DNA ends. Releases telomerase by unwinding the short telomerase RNA/telomeric DNA hybrid that is the intermediate in the telomerase reaction. Involved in the maintenance of ribosomal (rDNA). Required for efficient fork arrest at the replication fork barrier within rDNA. Involved in the maintenance of mitochondrial (mtDNA). Required to maintain mtDNA under conditions that introduce dsDNA breaks in mtDNA, either preventing or repairing dsDNA breaks. May inhibit replication progression to allow time for repair. May have a general role in chromosomal replication by affecting Okazaki fragment maturation. May have a role in conjunction with DNA2 helicase/nuclease in 5'-flap extension during Okazaki fragment processing. The polypeptide is ATP-dependent DNA helicase PIF1 (Candida albicans (strain SC5314 / ATCC MYA-2876) (Yeast)).